We begin with the raw amino-acid sequence, 445 residues long: tRNA modification GTPase MnmE (445 aa).

3 residues coordinate (6S)-5-formyl-5,6,7,8-tetrahydrofolate: Arg25, Glu83, and Lys121. The region spanning 217-371 (GVRVVILGPP…LLTLIQEKSR (155 aa)) is the TrmE-type G domain. GTP contacts are provided by residues 227–232 (NAGKST), 246–252 (SEHPGTT), and 271–274 (DTAG). 2 residues coordinate Mg(2+): Ser231 and Thr252. Lys445 contributes to the (6S)-5-formyl-5,6,7,8-tetrahydrofolate binding site.

Belongs to the TRAFAC class TrmE-Era-EngA-EngB-Septin-like GTPase superfamily. TrmE GTPase family. As to quaternary structure, homodimer. Heterotetramer of two MnmE and two MnmG subunits. The cofactor is K(+).

The protein resides in the cytoplasm. Its function is as follows. Exhibits a very high intrinsic GTPase hydrolysis rate. Involved in the addition of a carboxymethylaminomethyl (cmnm) group at the wobble position (U34) of certain tRNAs, forming tRNA-cmnm(5)s(2)U34. The polypeptide is tRNA modification GTPase MnmE (Anaplasma phagocytophilum (strain HZ)).